A 251-amino-acid polypeptide reads, in one-letter code: MRFDILTLFPEFFETPLRIGLVGKALQQGIAEVHCTNPRDFATDKHRRVDDEPYGGGVGMVLKPEPFFAAVASLPRLDPCEIILLTPQGQPLNQALLQELAQKAQLILLCGQYEGFDERIRQYLATREVSLGDFVLTGGEIPALALINGVVRLLPGTVGKVDSLKSESFQAGLLDYPQYTRPAEFQGHKVPPVLLSGDHQAIARWRLQQQLVRTWQRRPDLLAKRPLTAEEQQLLAEGLAEQHPGVNDVEK.

Residues Gly111 and 131–136 (LGDFVL) each bind S-adenosyl-L-methionine.

The protein belongs to the RNA methyltransferase TrmD family. Homodimer.

The protein resides in the cytoplasm. The catalysed reaction is guanosine(37) in tRNA + S-adenosyl-L-methionine = N(1)-methylguanosine(37) in tRNA + S-adenosyl-L-homocysteine + H(+). In terms of biological role, specifically methylates guanosine-37 in various tRNAs. This chain is tRNA (guanine-N(1)-)-methyltransferase, found in Synechococcus sp. (strain JA-2-3B'a(2-13)) (Cyanobacteria bacterium Yellowstone B-Prime).